The primary structure comprises 615 residues: Alpha-1,3-galactosidase B (615 aa).

A signal peptide spans M1–A23. PbH1 repeat units lie at residues S282 to G313, T423 to T445, P446 to G467, V478 to C500, H520 to R541, and V543 to A573.

This sequence belongs to the glycosyl hydrolase 110 family. B subfamily.

It carries out the reaction Hydrolysis of terminal, non-reducing branched (1-&gt;3)-alpha-D-galactosidic residues, producing free D-galactose.. It catalyses the reaction Hydrolysis of terminal, non-reducing linear (1-&gt;3)-alpha-D-galactosidic residues, producing free D-galactose.. The catalysed reaction is Hydrolysis of terminal, non-reducing alpha-D-galactose residues in alpha-D-galactosides, including galactose oligosaccharides, galactomannans and galactolipids.. Alpha-galactosidase. Removes both branched alpha-1,3-linked galactose residues of blood group B antigens and linear alpha-1,3-linked galactose structures. The chain is Alpha-1,3-galactosidase B (glaB) from Bacteroides thetaiotaomicron (strain ATCC 29148 / DSM 2079 / JCM 5827 / CCUG 10774 / NCTC 10582 / VPI-5482 / E50).